A 699-amino-acid polypeptide reads, in one-letter code: Ribosomal RNA large subunit methyltransferase K/L (699 aa).

A THUMP domain is found at 44 to 155 (DAYKLCLWSR…RDNVILGIDL (112 aa)).

The protein belongs to the methyltransferase superfamily. RlmKL family.

The protein resides in the cytoplasm. The catalysed reaction is guanosine(2445) in 23S rRNA + S-adenosyl-L-methionine = N(2)-methylguanosine(2445) in 23S rRNA + S-adenosyl-L-homocysteine + H(+). It catalyses the reaction guanosine(2069) in 23S rRNA + S-adenosyl-L-methionine = N(2)-methylguanosine(2069) in 23S rRNA + S-adenosyl-L-homocysteine + H(+). In terms of biological role, specifically methylates the guanine in position 2445 (m2G2445) and the guanine in position 2069 (m7G2069) of 23S rRNA. This is Ribosomal RNA large subunit methyltransferase K/L from Alteromonas mediterranea (strain DSM 17117 / CIP 110805 / LMG 28347 / Deep ecotype).